The following is a 362-amino-acid chain: Heme A synthase (362 aa).

5 helical membrane passes run 10–30 (LAAIRIWLTVVAGLIALMVLV), 102–122 (VIGMVYLLPFLWFLWRGAVSG), 128–148 (LWLIFGLGALQGAVGWWMVAS), 159–179 (VRLATHLSLALLIFAAIVWTL), and 198–218 (AWGLVGVTFVQLYLGALVAGL). H262 provides a ligand contact to heme. The next 3 helical transmembrane spans lie at 266–286 (AYTLFLLGAWHAFDVMRAGAG), 297–317 (LAAILVQAGLGIATLLMVVPI), and 318–338 (SLALLHQGTAIIVLTFAVLQA). A heme-binding site is contributed by H323.

Belongs to the COX15/CtaA family. Type 2 subfamily. As to quaternary structure, interacts with CtaB. It depends on heme b as a cofactor.

Its subcellular location is the cell membrane. It catalyses the reaction Fe(II)-heme o + 2 A + H2O = Fe(II)-heme a + 2 AH2. The protein operates within porphyrin-containing compound metabolism; heme A biosynthesis; heme A from heme O: step 1/1. Functionally, catalyzes the conversion of heme O to heme A by two successive hydroxylations of the methyl group at C8. The first hydroxylation forms heme I, the second hydroxylation results in an unstable dihydroxymethyl group, which spontaneously dehydrates, resulting in the formyl group of heme A. This chain is Heme A synthase, found in Bradyrhizobium sp. (strain BTAi1 / ATCC BAA-1182).